The chain runs to 616 residues: Dihydroxy-acid dehydratase (616 aa).

Asp-81 is a Mg(2+) binding site. Cys-122 contributes to the [2Fe-2S] cluster binding site. Mg(2+)-binding residues include Asp-123 and Lys-124. Residue Lys-124 is modified to N6-carboxylysine. Cys-195 contributes to the [2Fe-2S] cluster binding site. Residue Glu-491 coordinates Mg(2+). Ser-517 serves as the catalytic Proton acceptor.

Belongs to the IlvD/Edd family. As to quaternary structure, homodimer. Requires [2Fe-2S] cluster as cofactor. The cofactor is Mg(2+).

The catalysed reaction is (2R)-2,3-dihydroxy-3-methylbutanoate = 3-methyl-2-oxobutanoate + H2O. The enzyme catalyses (2R,3R)-2,3-dihydroxy-3-methylpentanoate = (S)-3-methyl-2-oxopentanoate + H2O. The protein operates within amino-acid biosynthesis; L-isoleucine biosynthesis; L-isoleucine from 2-oxobutanoate: step 3/4. It participates in amino-acid biosynthesis; L-valine biosynthesis; L-valine from pyruvate: step 3/4. In terms of biological role, functions in the biosynthesis of branched-chain amino acids. Catalyzes the dehydration of (2R,3R)-2,3-dihydroxy-3-methylpentanoate (2,3-dihydroxy-3-methylvalerate) into 2-oxo-3-methylpentanoate (2-oxo-3-methylvalerate) and of (2R)-2,3-dihydroxy-3-methylbutanoate (2,3-dihydroxyisovalerate) into 2-oxo-3-methylbutanoate (2-oxoisovalerate), the penultimate precursor to L-isoleucine and L-valine, respectively. The sequence is that of Dihydroxy-acid dehydratase from Yersinia pseudotuberculosis serotype I (strain IP32953).